Reading from the N-terminus, the 385-residue chain is Putative transporter YthQ (385 aa).

8 helical membrane passes run 24–44 (AVID…FVIY), 67–87 (WLYA…FLME), 106–128 (YALL…IVLP), 133–155 (SVLI…HIFF), 176–193 (TLVR…IVFT), 197–214 (LLAL…IRSL), 304–324 (AFTV…LLVY), and 365–385 (ILHY…LLFT).

The protein resides in the cell membrane. The chain is Putative transporter YthQ (ythQ) from Bacillus subtilis (strain 168).